Reading from the N-terminus, the 296-residue chain is uncharacterized protein (296 aa).

A helical transmembrane segment spans residues 7–26 (CFSLVCALGASTYLLWRGWL).

It localises to the membrane. This is an uncharacterized protein from Treponema pallidum (strain Nichols).